The chain runs to 231 residues: Acyl-protein thioesterase 1 (231 aa).

Catalysis depends on charge relay system residues Ser121, Asp178, and His211.

This sequence belongs to the AB hydrolase superfamily. AB hydrolase 2 family.

It localises to the cytoplasm. The protein resides in the nucleus. It carries out the reaction S-hexadecanoyl-L-cysteinyl-[protein] + H2O = L-cysteinyl-[protein] + hexadecanoate + H(+). Its function is as follows. Hydrolyzes fatty acids from S-acylated cysteine residues in proteins with a strong preference for palmitoylated G-alpha proteins over other acyl substrates. Mediates the deacylation of G-alpha proteins such as GPA1 in vivo, but has weak or no activity toward palmitoylated Ras proteins. Has weak lysophospholipase activity in vitro; however such activity may not exist in vivo. The sequence is that of Acyl-protein thioesterase 1 from Candida albicans (strain SC5314 / ATCC MYA-2876) (Yeast).